We begin with the raw amino-acid sequence, 82 residues long: Small ribosomal subunit protein bS18 (82 aa).

Belongs to the bacterial ribosomal protein bS18 family. Part of the 30S ribosomal subunit. Forms a tight heterodimer with protein bS6.

Its function is as follows. Binds as a heterodimer with protein bS6 to the central domain of the 16S rRNA, where it helps stabilize the platform of the 30S subunit. This chain is Small ribosomal subunit protein bS18, found in Bifidobacterium adolescentis (strain ATCC 15703 / DSM 20083 / NCTC 11814 / E194a).